A 63-amino-acid polypeptide reads, in one-letter code: Ferredoxin (63 aa).

Residues 2 to 29 form the 4Fe-4S ferredoxin-type domain; that stretch reads KVTVDQDLCIACGTCIDLCPSVFDWDDE. Residues cysteine 10, cysteine 13, cysteine 16, and cysteine 55 each coordinate [4Fe-4S] cluster.

Requires [4Fe-4S] cluster as cofactor.

Its function is as follows. Ferredoxins are iron-sulfur proteins that transfer electrons in a wide variety of metabolic reactions. This chain is Ferredoxin, found in Moorella thermoacetica (Clostridium thermoaceticum).